Consider the following 245-residue polypeptide: 1-(5-phosphoribosyl)-5-[(5-phosphoribosylamino)methylideneamino] imidazole-4-carboxamide isomerase (245 aa).

The active-site Proton acceptor is aspartate 7. Aspartate 129 (proton donor) is an active-site residue.

The protein belongs to the HisA/HisF family.

Its subcellular location is the cytoplasm. The enzyme catalyses 1-(5-phospho-beta-D-ribosyl)-5-[(5-phospho-beta-D-ribosylamino)methylideneamino]imidazole-4-carboxamide = 5-[(5-phospho-1-deoxy-D-ribulos-1-ylimino)methylamino]-1-(5-phospho-beta-D-ribosyl)imidazole-4-carboxamide. It functions in the pathway amino-acid biosynthesis; L-histidine biosynthesis; L-histidine from 5-phospho-alpha-D-ribose 1-diphosphate: step 4/9. The sequence is that of 1-(5-phosphoribosyl)-5-[(5-phosphoribosylamino)methylideneamino] imidazole-4-carboxamide isomerase from Escherichia coli O127:H6 (strain E2348/69 / EPEC).